The sequence spans 213 residues: MRIRNIRDAHLKINKAKNIIGVDNLKTKLDPKKFNALEIGSGKGGFIYQKAITNPGINYFGIEKNATVILKMINKSELLEQLTNLFIVHDDFALIDHEFPNACFDQIYLNFSDPWPKKRHAKKRLVDLAFLNKYQRILKADGIIEFKTDNDQLFNYAIEMINSLEQIKIIAYTNDLHSLDSSDALLKNNVITEYEQRFINLKKNINKIVFKFI.

Residues Glu38, Glu63, Asp91, and Asp113 each coordinate S-adenosyl-L-methionine. The active site involves Asp113. Residues Lys117, Asp149, and 192-195 each bind substrate; that span reads TEYE.

The protein belongs to the class I-like SAM-binding methyltransferase superfamily. TrmB family.

The enzyme catalyses guanosine(46) in tRNA + S-adenosyl-L-methionine = N(7)-methylguanosine(46) in tRNA + S-adenosyl-L-homocysteine. It participates in tRNA modification; N(7)-methylguanine-tRNA biosynthesis. Catalyzes the formation of N(7)-methylguanine at position 46 (m7G46) in tRNA. The chain is tRNA (guanine-N(7)-)-methyltransferase from Mycoplasmoides gallisepticum (strain R(low / passage 15 / clone 2)) (Mycoplasma gallisepticum).